A 156-amino-acid polypeptide reads, in one-letter code: Envelope glycoprotein L (156 aa).

The N-terminal stretch at 1-16 (MSPLVAVLVFFSAALG) is a signal peptide. An interaction with gH region spans residues 21 to 141 (GVAGNPHGLD…KELGEVAVHK (121 aa)). The 107-residue stretch at 50–156 (ELEWDDEDHP…LRYNGGPPAE (107 aa)) folds into the gL alphaherpesvirus-type domain. Cysteines 71 and 95 form a disulfide.

This sequence belongs to the herpesviridae glycoprotein L (gL) family. Alphaherpesvirinae gL subfamily. As to quaternary structure, interacts with glycoprotein H (gH); this interaction is necessary for the correct processing and cell surface expression of gH. The heterodimer gH/gL seems to interact with gB trimers during fusion. In terms of processing, O-glycosylated, and sialylated.

The protein resides in the virion membrane. It localises to the host cell membrane. It is found in the host Golgi apparatus. The protein localises to the host trans-Golgi network. The heterodimer glycoprotein H-glycoprotein L is required for the fusion of viral and plasma membranes leading to virus entry into the host cell. Acts as a functional inhibitor of gH and maintains gH in an inhibited form. Upon binding to host integrins, gL dissociates from gH leading to activation of the viral fusion glycoproteins gB and gH. The chain is Envelope glycoprotein L from Sus scrofa (Pig).